A 155-amino-acid polypeptide reads, in one-letter code: Deoxyuridine 5'-triphosphate nucleotidohydrolase (155 aa).

Substrate is bound by residues 74–76, asparagine 87, and 91–93; these read RSG and TID.

Belongs to the dUTPase family. Mg(2+) is required as a cofactor.

It carries out the reaction dUTP + H2O = dUMP + diphosphate + H(+). The protein operates within pyrimidine metabolism; dUMP biosynthesis; dUMP from dCTP (dUTP route): step 2/2. This enzyme is involved in nucleotide metabolism: it produces dUMP, the immediate precursor of thymidine nucleotides and it decreases the intracellular concentration of dUTP so that uracil cannot be incorporated into DNA. This chain is Deoxyuridine 5'-triphosphate nucleotidohydrolase, found in Dinoroseobacter shibae (strain DSM 16493 / NCIMB 14021 / DFL 12).